Reading from the N-terminus, the 238-residue chain is Ribonuclease PH (238 aa).

Phosphate contacts are provided by residues Arg-86 and 124-126 (GTR).

It belongs to the RNase PH family. In terms of assembly, homohexameric ring arranged as a trimer of dimers.

It catalyses the reaction tRNA(n+1) + phosphate = tRNA(n) + a ribonucleoside 5'-diphosphate. Phosphorolytic 3'-5' exoribonuclease that plays an important role in tRNA 3'-end maturation. Removes nucleotide residues following the 3'-CCA terminus of tRNAs; can also add nucleotides to the ends of RNA molecules by using nucleoside diphosphates as substrates, but this may not be physiologically important. Probably plays a role in initiation of 16S rRNA degradation (leading to ribosome degradation) during starvation. This is Ribonuclease PH from Acinetobacter baylyi (strain ATCC 33305 / BD413 / ADP1).